Consider the following 468-residue polypeptide: ATP synthase subunit beta (468 aa).

148 to 155 (GGAGVGKT) lines the ATP pocket.

It belongs to the ATPase alpha/beta chains family. F-type ATPases have 2 components, CF(1) - the catalytic core - and CF(0) - the membrane proton channel. CF(1) has five subunits: alpha(3), beta(3), gamma(1), delta(1), epsilon(1). CF(0) has three main subunits: a(1), b(2) and c(9-12). The alpha and beta chains form an alternating ring which encloses part of the gamma chain. CF(1) is attached to CF(0) by a central stalk formed by the gamma and epsilon chains, while a peripheral stalk is formed by the delta and b chains.

It localises to the cell inner membrane. It catalyses the reaction ATP + H2O + 4 H(+)(in) = ADP + phosphate + 5 H(+)(out). Functionally, produces ATP from ADP in the presence of a proton gradient across the membrane. The catalytic sites are hosted primarily by the beta subunits. This is ATP synthase subunit beta from Stenotrophomonas maltophilia (strain R551-3).